Reading from the N-terminus, the 598-residue chain is MGVLGSRVAWAWLVQLLLLQQLAGASHVVYDDLELQAAAATADGVPPSIVDSELRTGYHFQPPKNWINDPNAPMYYKGWYHLFYQYNPKGAVWGNIVWAHSVSRDLINWVALKPAIEPSIRADKYGCWSGSATMMADGTPVIMYTGVNRPDVNYQVQNVALPRNGSDPLLREWVKPGHNPVIVPEGGINATQFRDPTTAWRGADGHWRLLVGSLAGQSRGVAYVYRSRDFRRWTRAAQPLHSAPTGMWECPDFYPVTADGRREGVDTSSAVVDAAASARVKYVLKNSLDLRRYDYYTVGTYDRKAERYVPDDPAGDEHHIRYDYGNFYASKTFYDPAKRRRILWGWANESDTAADDVAKGWAGIQAIPRKVWLDPSGKQLLQWPIEEVERLRGKWPVILKDRVVKPGEHVEVTGLQTAQADVEVSFEVGSLEAAERLDPAMAYDAQRLCSARGADARGGVGPFGLWVLASAGLEEKTAVFFRVFRPAARGGGAGKPVVLMCTDPTKSSRNPNMYQPTFAGFVDTDITNGKISLRSLIDRSVVESFGAGGKACILSRVYPSLAIGKNARLYVFNNGKAEIKVSQLTAWEMKKPVMMNGA.

The signal sequence occupies residues 1–25; the sequence is MGVLGSRVAWAWLVQLLLLQQLAGA. D69 is an active-site residue. N-linked (GlcNAc...) asparagine glycans are attached at residues N164, N189, and N348.

Belongs to the glycosyl hydrolase 32 family.

The protein localises to the secreted. Its subcellular location is the extracellular space. It localises to the apoplast. The protein resides in the cell wall. The catalysed reaction is Hydrolysis of terminal non-reducing beta-D-fructofuranoside residues in beta-D-fructofuranosides.. May play a role in sucrose partitioning during seed development. The protein is Beta-fructofuranosidase, insoluble isoenzyme 2 (CIN2) of Oryza sativa subsp. indica (Rice).